Consider the following 86-residue polypeptide: RNA-binding protein Hfq (86 aa).

Residues 9–68 (DPYLNTLRKEKVPVSIYLVNGIKLQGSIESFDQFVVLLKNTVSQMVYKHAISTVVPARPV) form the Sm domain. The disordered stretch occupies residues 66–86 (RPVRLPSPSDSEHGDSEPGNA). Over residues 75–86 (DSEHGDSEPGNA) the composition is skewed to basic and acidic residues.

The protein belongs to the Hfq family. In terms of assembly, homohexamer.

Functionally, RNA chaperone that binds small regulatory RNA (sRNAs) and mRNAs to facilitate mRNA translational regulation in response to envelope stress, environmental stress and changes in metabolite concentrations. Also binds with high specificity to tRNAs. The chain is RNA-binding protein Hfq from Pseudomonas putida (strain W619).